Reading from the N-terminus, the 124-residue chain is Small ribosomal subunit protein eS25 (124 aa).

Basic and acidic residues predominate over residues 1 to 22 (MPPKDSKQKKDAGKSKKDKDPV). Residues 1–37 (MPPKDSKQKKDAGKSKKDKDPVNKSGGKAKKKKWSKG) form a disordered region. A compositionally biased stretch (basic residues) spans 27-37 (GKAKKKKWSKG).

This sequence belongs to the eukaryotic ribosomal protein eS25 family. Component of the small ribosomal subunit.

It localises to the cytoplasm. In terms of biological role, component of the small ribosomal subunit. The ribosome is a large ribonucleoprotein complex responsible for the synthesis of proteins in the cell. The chain is Small ribosomal subunit protein eS25 (rps25) from Danio rerio (Zebrafish).